An 80-amino-acid chain; its full sequence is Lantibiotic Flvalpha.a (80 aa).

A propeptide spans 1–38 (MNKNPIYRSEEEAKDIACGNVAAELDENSQALDAINGA) (cleaved by FlvT). 2,3-didehydrobutyrine; by FlvM1 is present on residues T43 and T47. Positions 52 to 55 (TVGC) form a cross-link, beta-methyllanthionine (Thr-Cys); by FlvM1. Positions 58–68 (SYGLGNGGYCC) form a cross-link, lanthionine (Ser-Cys); by FlvM1. Cross-links (beta-methyllanthionine (Thr-Cys); by FlvM1) lie at residues 69 to 74 (TYTVEC) and 71 to 78 (TVECSKTC).

The lanthionine formed by Ser-58 and Cys-68 forms a putative lipid II binding motif. In terms of processing, maturation of FlvA1 peptides involves the enzymatic conversion of Thr, and Ser into dehydrated AA and the formation of thioether bonds with cysteines. Modifications are processed by the flavecin synthetase FlvM1. This is followed by membrane translocation and cleavage of the modified precursor. Post-translationally, contains DL-lanthionine and DL-beta-methyllanthionine, when coepressed in E.coli with the flavecin synthetase FlvM1.

It is found in the secreted. Functionally, lanthionine-containing peptide antibiotic (lantibiotic) only active on Gram-positive bacteria in synergy with Flvbeta peptides, which are encoded by the same operon than Flvalpha.a. Shows antibacterial activity in synergy with Flvbeta.b, Flvbeta.c, Flvbeta.e and Flvbeta.g. Does not show antibacterial activity when tested with Flvbeta.a, Flvbeta.d, Flvbeta.f and Flvbeta.h. The bactericidal activity of lantibiotics is based on depolarization of energized bacterial cytoplasmic membranes, initiated by the formation of aqueous transmembrane pores. The protein is Lantibiotic Flvalpha.a of Ruminococcus flavefaciens.